A 641-amino-acid polypeptide reads, in one-letter code: Threonine--tRNA ligase (641 aa).

The TGS domain occupies 1–61 (MPIITLPDGT…TQNSHIQIIT (61 aa)). The tract at residues 242–533 (DHRKLGKKYS…LIENYSGNFP (292 aa)) is catalytic. 3 residues coordinate Zn(2+): C333, H384, and H510.

This sequence belongs to the class-II aminoacyl-tRNA synthetase family. Homodimer. Zn(2+) is required as a cofactor.

The protein resides in the cytoplasm. The enzyme catalyses tRNA(Thr) + L-threonine + ATP = L-threonyl-tRNA(Thr) + AMP + diphosphate + H(+). Functionally, catalyzes the attachment of threonine to tRNA(Thr) in a two-step reaction: L-threonine is first activated by ATP to form Thr-AMP and then transferred to the acceptor end of tRNA(Thr). Also edits incorrectly charged L-seryl-tRNA(Thr). The polypeptide is Threonine--tRNA ligase (Prochlorococcus marinus (strain NATL2A)).